A 596-amino-acid polypeptide reads, in one-letter code: DNA polymerase kappa (596 aa).

Residues 85–320 enclose the UmuC domain; that stretch reads CVCIDMDAYF…LPIRKVGGIG (236 aa). Mg(2+) contacts are provided by Asp-89 and Asp-180. The active site involves Glu-181. The UBZ4-type zinc finger occupies 516–545; that stretch reads TRPCPICGTDVENRLDVMNCHVDECILKVQ. Zn(2+)-binding residues include Cys-519, Cys-522, His-536, and Cys-540. The disordered stretch occupies residues 559–584; that stretch reads NKSTQKPERPSTKKRKLQEKRPKAKK. A compositionally biased stretch (basic residues) spans 570-584; it reads TKKRKLQEKRPKAKK.

The protein belongs to the DNA polymerase type-Y family. The cofactor is Mg(2+). Mn(2+) serves as cofactor.

The protein localises to the nucleus. The enzyme catalyses DNA(n) + a 2'-deoxyribonucleoside 5'-triphosphate = DNA(n+1) + diphosphate. In terms of biological role, DNA polymerase specifically involved in DNA repair. Plays an important role in translesion synthesis, where the normal high-fidelity DNA polymerases cannot proceed and DNA synthesis stalls. Depending on the context, it inserts the correct base, but causes frequent base transitions, transversions and frameshifts. Lacks 3'-5' proofreading exonuclease activity. Forms a Schiff base with 5'-deoxyribose phosphate at abasic sites, but does not have lyase activity. This is DNA polymerase kappa (polk-1) from Caenorhabditis elegans.